The primary structure comprises 383 residues: Multidrug resistance protein MexA (383 aa).

Positions 1–23 (MQRTPAMRVLVPALLVAISALSG) are cleaved as a signal peptide. Cysteine 24 carries the N-palmitoyl cysteine lipid modification. Cysteine 24 is lipidated: S-diacylglycerol cysteine. A coiled-coil region spans residues 97–151 (ATYEADYQSAQANLASTQEQAQRYKLLVADQAVSKQQYADANAAYLQSKAAVEQA).

Belongs to the membrane fusion protein (MFP) (TC 8.A.1) family. In terms of assembly, component of the MexAB-OprM multidrug efflux complex, composed of six MexA subunits forming a hexameric tube, binding to a MexB trimer, which interact with the trimeric OprM outer membrane channel protein. OprM is thought to not directly contact MexB; instead, MexA joins MexB and OprM by forming a funnel-like hexamer anchored to the inner membrane. MexA may initially form a hexameric ring complex with MexB prior to OprM, then OprM undergoes a conformational change as it contacts MexA, allowing the periplasmic gate to open. It is thought that, under high intracellular substrate concentration, MexB ejects substrate into the tunnel formed by MexA-OprM; as the substrate level declines, conformational changes in MexB cause efflux to reduce and stop and the complex shifts to the closed state. MexB subunit acts as a substrate:proton antiporter and activity is enhanced significantly when in complex with MexA and OprM, in vitro.

The protein localises to the cell inner membrane. Its activity is regulated as follows. Export of antibiotics and solvents is dramatically decreased in the presence of the protonophore carbonyl cyanide m-chlorophenylhydrazone (CCCP), therefore may be driven by a proton gradient. Antibiotic efflux is inhibited by pyridopyrimidine derivatives, such as ABI-PP, acting by binding to a hydrophobic pocket in MexB. Functionally, the periplasmic linker component of the MexAB-OprM efflux system that confers multidrug resistance. Functions as the major efflux pump for n-hexane and p-xylene efflux. Has been shown in one study to be involved in the active efflux of the autoinducer N-(3-oxododecanoyl) homoserine lactone, thereby playing an indirect role in quorum-sensing; but has been shown in another study not to be involved in efflux of this autoinducer. Over-expression of the pump increases antibiotic and solvent efflux capacities. Implicated in the secretion of the siderophore pyoverdine. The sequence is that of Multidrug resistance protein MexA (mexA) from Pseudomonas aeruginosa (strain ATCC 15692 / DSM 22644 / CIP 104116 / JCM 14847 / LMG 12228 / 1C / PRS 101 / PAO1).